The sequence spans 90 residues: Probable Fe(2+)-trafficking protein (90 aa).

Belongs to the Fe(2+)-trafficking protein family. As to quaternary structure, monomer.

Its function is as follows. Could be a mediator in iron transactions between iron acquisition and iron-requiring processes, such as synthesis and/or repair of Fe-S clusters in biosynthetic enzymes. The protein is Probable Fe(2+)-trafficking protein of Edwardsiella ictaluri (strain 93-146).